The primary structure comprises 89 residues: UPF0237 protein lin0537 (89 aa).

In terms of domain architecture, ACT spans 4–78 (VLTVIGKDNV…EELQVKIHIQ (75 aa)).

This sequence belongs to the UPF0237 family.

This chain is UPF0237 protein lin0537, found in Listeria innocua serovar 6a (strain ATCC BAA-680 / CLIP 11262).